The chain runs to 394 residues: Elongation factor Tu (394 aa).

The tr-type G domain maps to lysine 10 to glutamate 204. A G1 region spans residues glycine 19–threonine 26. Position 19 to 26 (glycine 19 to threonine 26) interacts with GTP. Threonine 26 is a binding site for Mg(2+). A G2 region spans residues glycine 60–asparagine 64. Residues aspartate 81 to glycine 84 form a G3 region. Residues aspartate 81 to histidine 85 and asparagine 136 to aspartate 139 each bind GTP. The segment at asparagine 136–aspartate 139 is G4. The G5 stretch occupies residues serine 174–leucine 176.

Belongs to the TRAFAC class translation factor GTPase superfamily. Classic translation factor GTPase family. EF-Tu/EF-1A subfamily. In terms of assembly, monomer.

The protein localises to the cytoplasm. The catalysed reaction is GTP + H2O = GDP + phosphate + H(+). Functionally, GTP hydrolase that promotes the GTP-dependent binding of aminoacyl-tRNA to the A-site of ribosomes during protein biosynthesis. This chain is Elongation factor Tu, found in Chlamydia caviae (strain ATCC VR-813 / DSM 19441 / 03DC25 / GPIC) (Chlamydophila caviae).